The chain runs to 263 residues: Glycerol uptake facilitator protein (263 aa).

The Cytoplasmic segment spans residues 1–7; it reads MNIYRKK. The helical transmembrane segment at 8 to 36 threads the bilayer; sequence NIIKKCFMEFFGTGLVMFFGIGCLAASKL. At 37-41 the chain is on the extracellular side; that stretch reads TNANF. A helical membrane pass occupies residues 42–62; sequence TQFEISCIWGFGVSIAIYFSS. At 63 to 65 the chain is on the cytoplasmic side; it reads SIS. An intramembrane segment occupies 66–69; it reads GAHL. An NPA 1 motif is present at residues 70–72; the sequence is NPA. The segment at residues 70 to 80 is an intramembrane region (helical); sequence NPAVTIFFWLS. At 81 to 86 the chain is on the cytoplasmic side; sequence SKLNKR. The chain crosses the membrane as a helical span at residues 87–110; it reads KVLPYIISQTLGSFFFTMLTYYLY. At 111-145 the chain is on the extracellular side; sequence NNLLISFERNNNVVRGTQESLNLASIFCVYPNYNN. Residues 146-171 traverse the membrane as a helical segment; that stretch reads SFIYDFIIEIFSTALFILIVLEFNNR. Residues 172–181 are Cytoplasmic-facing; it reads NSNYFLYNRS. A helical transmembrane segment spans residues 182 to 198; sequence VAPILTGFLVCMINLVI. At 199–202 the chain is on the extracellular side; it reads NPLN. An intramembrane segment occupies 203–206; sequence NISL. The short motif at 207-209 is the NPA 2 element; the sequence is NPA. The segment at residues 207 to 220 is an intramembrane region (helical); it reads NPARDLGPKILLSL. Residues 221–236 lie on the Extracellular side of the membrane; sequence TGWGLFSFTGGNDNIL. The helical transmembrane segment at 237–259 threads the bilayer; the sequence is YCFIPIMGPILGANLGGWIHKTL. Over 260 to 263 the chain is Cytoplasmic; sequence INNS.

This sequence belongs to the MIP/aquaporin (TC 1.A.8) family.

It is found in the cell membrane. It carries out the reaction glycerol(in) = glycerol(out). Mediates glycerol diffusion across the cytoplasmic membrane via a pore-type mechanism. The polypeptide is Glycerol uptake facilitator protein (glpF) (Buchnera aphidicola subsp. Acyrthosiphon pisum (strain APS) (Acyrthosiphon pisum symbiotic bacterium)).